The following is a 376-amino-acid chain: Ribonucleoside-diphosphate reductase subunit beta (376 aa).

Residues D85, E116, and H119 each contribute to the Fe cation site. The active site involves Y123. Fe cation contacts are provided by E205, E239, and H242.

Belongs to the ribonucleoside diphosphate reductase small chain family. Tetramer of two alpha and two beta subunits. Fe cation serves as cofactor.

The enzyme catalyses a 2'-deoxyribonucleoside 5'-diphosphate + [thioredoxin]-disulfide + H2O = a ribonucleoside 5'-diphosphate + [thioredoxin]-dithiol. In terms of biological role, provides the precursors necessary for DNA synthesis. Catalyzes the biosynthesis of deoxyribonucleotides from the corresponding ribonucleotides. This chain is Ribonucleoside-diphosphate reductase subunit beta (nrdB), found in Buchnera aphidicola subsp. Acyrthosiphon pisum (strain APS) (Acyrthosiphon pisum symbiotic bacterium).